The chain runs to 1370 residues: Putative surface protein SA2285 (1370 aa).

Positions 1–50 (MRDKKGPVNKRVDFLSNKLNKYSIRKFTVGTASILIGSLMYLGTQQEAEA) are cleaved as a signal peptide. Disordered stretches follow at residues 77–116 (NKDT…EDTP), 439–472 (KFNP…NPLT), and 495–1344 (EYGP…TGLE). Composition is skewed to basic and acidic residues over residues 96–116 (DTIE…EDTP), 450–460 (KVTREGQKGEK), 504–522 (GHRD…EEVP), 553–569 (SIVE…RKFN), 578–588 (KVTREGQKGEK), 605–618 (SKGE…KDPI), 632–650 (GHRD…EEVP), 681–697 (SIVE…RKFN), 706–716 (KVTREGQKGEK), 733–746 (SKGE…KDPI), 760–778 (GHRD…EEVP), 809–825 (SIVE…RKFN), 834–844 (KVTREGQKGEK), 861–874 (SKGE…KDPI), 888–906 (GHRD…EEVP), 937–953 (SIVE…RKFN), 962–972 (KVTREGQKGEK), 989–1002 (SKGE…KDPI), 1016–1034 (GHRD…EEVP), 1065–1081 (SIVE…RKFN), 1090–1100 (KVTREGQKGEK), 1117–1130 (SKGE…KDPV), 1174–1185 (KVIEEPVDDVIK), and 1202–1221 (FETK…RVKQ). One can recognise a G5 1 domain in the interval 418 to 500 (SAKNNNRIRK…NELTEYGPET (83 aa)). A G5 2 domain is found at 546 to 628 (YGPVKGDSIV…NELTEYGPET (83 aa)). The region spanning 674 to 756 (YGPVKGDSIV…NELTEYGPET (83 aa)) is the G5 3 domain. Residues 802-884 (YGPVKGDSIV…NELTEYGPET (83 aa)) enclose the G5 4 domain. Residues 930–1012 (YGPVKGDSIV…NELTEYGPET (83 aa)) enclose the G5 5 domain. A G5 6 domain is found at 1058-1140 (YGPVKGDSIV…NELTEFGGEK (83 aa)). Residues 1186–1268 (HGPKTGTPET…DKIVEFGGEK (83 aa)) enclose the G5 7 domain. The segment covering 1224 to 1238 (QPGSKTITTPITVNP) has biased composition (polar residues). Basic and acidic residues predominate over residues 1252-1282 (EITKQPVDKIVEFGGEKPKDPKGPENPEKPS). The LPXTG sorting signal motif lies at 1338-1342 (LPKTG). Thr1341 carries the pentaglycyl murein peptidoglycan amidated threonine modification. Positions 1342 to 1370 (GLESTQKGLIFSSIIGIAGLMLLARRRKN) are cleaved as a propeptide — removed by sortase.

It is found in the secreted. The protein resides in the cell wall. This Staphylococcus aureus (strain N315) protein is Putative surface protein SA2285.